Here is a 389-residue protein sequence, read N- to C-terminus: Chalcone synthase 1 (389 aa).

Cysteine 164 is a catalytic residue.

Belongs to the thiolase-like superfamily. Chalcone/stilbene synthases family.

The catalysed reaction is (E)-4-coumaroyl-CoA + 3 malonyl-CoA + 3 H(+) = 2',4,4',6'-tetrahydroxychalcone + 3 CO2 + 4 CoA. The protein operates within secondary metabolite biosynthesis; flavonoid biosynthesis. The primary product of this enzyme is 4,2',4',6'-tetrahydroxychalcone (also termed naringenin-chalcone or chalcone) which can under specific conditions spontaneously isomerize into naringenin. In Cicer arietinum (Chickpea), this protein is Chalcone synthase 1 (CHS1).